The sequence spans 619 residues: Zinc finger protein 131 (619 aa).

The 65-residue stretch at 34 to 98 folds into the BTB domain; sequence TDITLIVDGH…TYTAKLMIQG (65 aa). A Nuclear localization signal 1 motif is present at residues 137–148; the sequence is TGKNEAKKRKIA. S231 is subject to Phosphoserine. 3 consecutive C2H2-type zinc fingers follow at residues 261 to 283, 288 to 311, and 328 to 350; these read FHCE…MKSH, FKCE…NCYH, and HICQ…LRKH. Glycyl lysine isopeptide (Lys-Gly) (interchain with G-Cter in SUMO2) cross-links involve residues K289 and K295. The short motif at 317–328 is the Nuclear localization signal 2 element; the sequence is VSKKQRTGKKIH. A C2H2-type 4; degenerate zinc finger spans residues 356-381; the sequence is FECSNCHERFARNSTLKCHLTACQTG. 2 C2H2-type zinc fingers span residues 392 to 414 and 420 to 443; these read YECQ…LVIH and NHCT…SDAH. 2 stretches are compositionally biased toward basic and acidic residues: residues 574–587 and 595–612; these read QEER…AAME and LETK…ENDR. Residues 574–619 form a disordered region; sequence QEEREPNHADAAMEEHEDAEGLETKPSEYSQARKTENDRTSLPVLE. K598 participates in a covalent cross-link: Glycyl lysine isopeptide (Lys-Gly) (interchain with G-Cter in SUMO).

This sequence belongs to the krueppel C2H2-type zinc-finger protein family. In terms of processing, monosumoylated at Lys-598 by CBX4 and UHRF2. Sumoylation may potentiate ZNF131 inhibition of estrogen signaling. Sumoylation does not interfere with ubiquitination. Ubiquitinated. As to expression, ubiquitously expressed. Predominant expression is found in the developing central nervous system with strongest signals in the forebrain, midbrain, and hindbrain areas and in the neural tube.

It is found in the nucleus. In terms of biological role, may be involved in transcriptional regulation as a repressor of ESR1/ER-alpha signaling. Plays a role during development and organogenesis as well as in the function of the adult central nervous system. This chain is Zinc finger protein 131 (Znf131), found in Mus musculus (Mouse).